We begin with the raw amino-acid sequence, 136 residues long: Large ribosomal subunit protein uL13 (136 aa).

The protein belongs to the universal ribosomal protein uL13 family. Part of the 50S ribosomal subunit.

This protein is one of the early assembly proteins of the 50S ribosomal subunit, although it is not seen to bind rRNA by itself. It is important during the early stages of 50S assembly. This Thermoplasma acidophilum (strain ATCC 25905 / DSM 1728 / JCM 9062 / NBRC 15155 / AMRC-C165) protein is Large ribosomal subunit protein uL13.